The sequence spans 239 residues: MLTRKQLDLLRFIQQRMRETGVPPSFDEMKDALDLKSKSGIHRLITALEERGFLRRLPNRARAIEVIRIPEAVASGPAEVVRFTPSVVEGGRSSAPVKPAPLPTALVSDESGHAVSIPVMGRIAAGTPISAIQSQSRSVAMSPDFLAGGEHYALEVRGDSMIEAGILDGDLVVIRRQDTANTGDIVVALIDDEEATLKRLRRRGSSIALEAANPAYETRVLGPDRVRIQGRLVSLIRKY.

A DNA-binding region (H-T-H motif) is located at residues 26–46 (FDEMKDALDLKSKSGIHRLIT). Active-site for autocatalytic cleavage activity residues include Ser160 and Lys198.

The protein belongs to the peptidase S24 family. In terms of assembly, homodimer.

The enzyme catalyses Hydrolysis of Ala-|-Gly bond in repressor LexA.. Functionally, represses a number of genes involved in the response to DNA damage (SOS response), including recA and lexA. In the presence of single-stranded DNA, RecA interacts with LexA causing an autocatalytic cleavage which disrupts the DNA-binding part of LexA, leading to derepression of the SOS regulon and eventually DNA repair. This is LexA repressor from Methylobacterium sp. (strain 4-46).